Reading from the N-terminus, the 2944-residue chain is Collagen alpha-1(VII) chain (2944 aa).

An N-terminal signal peptide occupies residues 1–16; it reads MTLRLLVAALCAGILA. Positions 17–1253 are nonhelical region (NC1); that stretch reads EAPRVRAQHR…PEPCPVYCPK (1237 aa). In terms of domain architecture, VWFA 1 spans 38-211; it reads DIVFLLDGSS…SILRTLLPLV (174 aa). 9 consecutive Fibronectin type-III domains span residues 234–329, 330–416, 417–507, 510–597, 600–687, 688–775, 778–866, 869–957, and 958–1051; these read APRD…TALE, GPEL…TDAS, VEQT…PELP, PVTD…EPET, AVPG…DPLG, PVRT…APEP, RVSR…PPEA, ALGT…SPRV, and PSIE…CPRG. N-linked (GlcNAc...) asparagine glycosylation occurs at Asn337. The tract at residues 632-651 is disordered; sequence STGSGPESSQTLPPDSTATD. Residue Asn786 is glycosylated (N-linked (GlcNAc...) asparagine). The 176-residue stretch at 1054-1229 folds into the VWFA 2 domain; sequence DVVFLPHATQ…PSLDQAVSGL (176 aa). The N-linked (GlcNAc...) asparagine glycan is linked to Asn1109. 2 consecutive short sequence motifs (cell attachment site) follow at residues 1170–1172 and 1334–1336; these read RGD. Disordered stretches follow at residues 1239–1941, 1963–2782, and 2837–2872; these read TTQP…SVPN, WDES…EKGE, and SHAE…PWDS. Residues 1254–1477 form an interrupted collagenous region region; sequence GQKGEPGEMG…GPRGPPGAIG (224 aa). The interval 1254-2784 is triple-helical region; that stretch reads GQKGEPGEMG…GPRGEKGEAA (1531 aa). The segment covering 1336 to 1346 has biased composition (basic and acidic residues); it reads DPGERGPRGPK. Gly residues predominate over residues 1355 to 1365; it reads VIGGEGPGLPG. Basic and acidic residues predominate over residues 1399–1408; it reads KGDKGDRGER. The span at 1429 to 1440 shows a compositional bias: pro residues; that stretch reads PGSPGPQGPVGP. Over residues 1574 to 1583 the composition is skewed to low complexity; sequence RGPPGLVLPG. Basic and acidic residues-rich tracts occupy residues 1630 to 1642, 1669 to 1683, and 1715 to 1733; these read RGRD…KGDE, VGEK…EDGR, and AREK…RGPK. The segment covering 1786–1802 has biased composition (low complexity); the sequence is KPGAAGPSGPNGAAGKA. Basic and acidic residues predominate over residues 1852-1877; sequence EDGRKGEKGDSGASGREGRDGPKGER. The segment covering 1886–1897 has biased composition (pro residues); that stretch reads QGPPGLPGPVGP. A compositionally biased stretch (gly residues) spans 1898-1911; sequence PGQGFPGVPGGTGP. The span at 1974 to 1984 shows a compositional bias: basic and acidic residues; the sequence is PERRRGPKGDS. The Cell attachment site motif lies at 2008–2010; that stretch reads RGD. Pro2036 and Pro2039 each carry 4-hydroxyproline. Gly residues predominate over residues 2046–2055; it reads GRAGGVGEAG. Basic and acidic residues predominate over residues 2056 to 2074; it reads RPGERGERGEKGERGEQGR. The span at 2078 to 2092 shows a compositional bias: pro residues; it reads PGLPGTPGPPGPPGP. 4-hydroxyproline is present on residues Pro2084, Pro2087, and Pro2090. Residues 2127–2143 show a composition bias toward basic and acidic residues; the sequence is PKGDRGVPGIKGDRGEP. Pro2167, Pro2176, Pro2185, and Pro2188 each carry 4-hydroxyproline. Composition is skewed to low complexity over residues 2191 to 2206 and 2235 to 2250; these read PGLA…SGLK and SGLV…PGQV. Residues 2328 to 2346 are compositionally biased toward basic and acidic residues; sequence AKGDRGLPGPRGEKGEAGR. The segment covering 2387–2406 has biased composition (low complexity); sequence VKGDLGLPGLPGAPGVVGFP. The span at 2438–2448 shows a compositional bias: pro residues; sequence PLGPPGPPGSV. 2 stretches are compositionally biased toward basic and acidic residues: residues 2471–2486 and 2534–2570; these read RGER…DGRP and AKGD…EPGD. Residues 2553–2555 carry the Cell attachment site motif; sequence RGD. The span at 2573–2601 shows a compositional bias: low complexity; sequence SAGLPGLRGLLGPQGQPGAAGIPGDPGSP. 5-hydroxylysine; alternate occurs at positions 2625 and 2631. O-linked (Gal...) hydroxylysine; alternate glycans are attached at residues Lys2625 and Lys2631. 4-hydroxyproline is present on residues Pro2664, Pro2667, and Pro2673. A compositionally biased stretch (gly residues) spans 2704 to 2713; sequence GTPGIGGFPG. Over residues 2749 to 2762 the composition is skewed to low complexity; it reads GERVVGAPGVPGAP. The segment at 2785–2944 is nonhelical region (NC2); that stretch reads LTEDDIRGFV…QSQGTGTAQD (160 aa). Residues 2837–2847 are compositionally biased toward basic and acidic residues; that stretch reads SHAEEEERVPP. Positions 2848 to 2872 are enriched in acidic residues; that stretch reads EDDEYSEYSEYSVEEYQDPEAPWDS. Positions 2872–2944 constitute a BPTI/Kunitz inhibitor domain; the sequence is SDDPCSLPLD…QSQGTGTAQD (73 aa). 3 disulfides stabilise this stretch: Cys2876/Cys2929, Cys2885/Cys2912, and Cys2904/Cys2925.

As to quaternary structure, homotrimer. Interacts with MIA3/TANGO1; facilitating its loading into transport carriers and subsequent secretion. Prolines at the third position of the tripeptide repeating unit (G-X-Y) are hydroxylated in some or all of the chains.

It is found in the secreted. The protein localises to the extracellular space. The protein resides in the extracellular matrix. It localises to the basement membrane. Functionally, stratified squamous epithelial basement membrane protein that forms anchoring fibrils which may contribute to epithelial basement membrane organization and adherence by interacting with extracellular matrix (ECM) proteins such as type IV collagen. The protein is Collagen alpha-1(VII) chain (COL7A1) of Homo sapiens (Human).